A 357-amino-acid polypeptide reads, in one-letter code: Phosphoribosylformylglycinamidine cyclo-ligase (357 aa).

The protein belongs to the AIR synthase family.

It is found in the cytoplasm. The catalysed reaction is 2-formamido-N(1)-(5-O-phospho-beta-D-ribosyl)acetamidine + ATP = 5-amino-1-(5-phospho-beta-D-ribosyl)imidazole + ADP + phosphate + H(+). The protein operates within purine metabolism; IMP biosynthesis via de novo pathway; 5-amino-1-(5-phospho-D-ribosyl)imidazole from N(2)-formyl-N(1)-(5-phospho-D-ribosyl)glycinamide: step 2/2. This Rhodopseudomonas palustris (strain ATCC BAA-98 / CGA009) protein is Phosphoribosylformylglycinamidine cyclo-ligase.